The chain runs to 455 residues: L-serine dehydratase 2 (455 aa).

The protein belongs to the iron-sulfur dependent L-serine dehydratase family. [4Fe-4S] cluster is required as a cofactor. Activated by post-translational modification by a system involving at least three gene products. Activation is mimicked in vitro by iron and dithiothreitol. There is considerable evidence for a free-radical activation mechanism.

It carries out the reaction L-serine = pyruvate + NH4(+). It functions in the pathway carbohydrate biosynthesis; gluconeogenesis. Its function is as follows. Also deaminates threonine, particularly when it is present in high concentration. In Escherichia coli (strain K12), this protein is L-serine dehydratase 2 (sdaB).